Here is a 429-residue protein sequence, read N- to C-terminus: 3-phosphoshikimate 1-carboxyvinyltransferase (429 aa).

Positions 23, 24, and 28 each coordinate 3-phosphoshikimate. Lysine 23 serves as a coordination point for phosphoenolpyruvate. Phosphoenolpyruvate is bound by residues glycine 95 and arginine 123. Residues serine 168, glutamine 170, aspartate 316, and lysine 343 each contribute to the 3-phosphoshikimate site. Glutamine 170 is a phosphoenolpyruvate binding site. Aspartate 316 functions as the Proton acceptor in the catalytic mechanism. Positions 347 and 389 each coordinate phosphoenolpyruvate.

Belongs to the EPSP synthase family. As to quaternary structure, monomer.

It localises to the cytoplasm. The catalysed reaction is 3-phosphoshikimate + phosphoenolpyruvate = 5-O-(1-carboxyvinyl)-3-phosphoshikimate + phosphate. It functions in the pathway metabolic intermediate biosynthesis; chorismate biosynthesis; chorismate from D-erythrose 4-phosphate and phosphoenolpyruvate: step 6/7. In terms of biological role, catalyzes the transfer of the enolpyruvyl moiety of phosphoenolpyruvate (PEP) to the 5-hydroxyl of shikimate-3-phosphate (S3P) to produce enolpyruvyl shikimate-3-phosphate and inorganic phosphate. The protein is 3-phosphoshikimate 1-carboxyvinyltransferase of Bacillus cereus (strain 03BB102).